Consider the following 1212-residue polypeptide: DNA-directed RNA polymerase subunit beta' (1212 aa).

Positions 60, 62, 75, and 78 each coordinate Zn(2+). Positions 450, 452, and 454 each coordinate Mg(2+). Cys819, Cys893, Cys900, and Cys903 together coordinate Zn(2+).

It belongs to the RNA polymerase beta' chain family. The RNAP catalytic core consists of 2 alpha, 1 beta, 1 beta' and 1 omega subunit. When a sigma factor is associated with the core the holoenzyme is formed, which can initiate transcription. Mg(2+) serves as cofactor. It depends on Zn(2+) as a cofactor.

It carries out the reaction RNA(n) + a ribonucleoside 5'-triphosphate = RNA(n+1) + diphosphate. In terms of biological role, DNA-dependent RNA polymerase catalyzes the transcription of DNA into RNA using the four ribonucleoside triphosphates as substrates. The sequence is that of DNA-directed RNA polymerase subunit beta' from Streptococcus thermophilus (strain CNRZ 1066).